Here is a 462-residue protein sequence, read N- to C-terminus: Glycine--tRNA ligase (462 aa).

The substrate site is built by Arg-101 and Glu-164. ATP-binding positions include 196–198 (RNE), 206–211 (FRTREF), 283–284 (EL), and 327–330 (GVDR). Substrate is bound at residue 211-215 (FEQME). 323 to 327 (EPSAG) contacts substrate.

Belongs to the class-II aminoacyl-tRNA synthetase family. In terms of assembly, homodimer.

It is found in the cytoplasm. The enzyme catalyses tRNA(Gly) + glycine + ATP = glycyl-tRNA(Gly) + AMP + diphosphate. Its function is as follows. Catalyzes the attachment of glycine to tRNA(Gly). This chain is Glycine--tRNA ligase, found in Thermobifida fusca (strain YX).